The primary structure comprises 204 residues: Urease accessory protein UreG (204 aa).

Position 12–19 (12–19 (GPVGSGKT)) interacts with GTP.

Belongs to the SIMIBI class G3E GTPase family. UreG subfamily. In terms of assembly, homodimer. UreD, UreF and UreG form a complex that acts as a GTP-hydrolysis-dependent molecular chaperone, activating the urease apoprotein by helping to assemble the nickel containing metallocenter of UreC. The UreE protein probably delivers the nickel.

The protein localises to the cytoplasm. Facilitates the functional incorporation of the urease nickel metallocenter. This process requires GTP hydrolysis, probably effectuated by UreG. This Pseudomonas paraeruginosa (strain DSM 24068 / PA7) (Pseudomonas aeruginosa (strain PA7)) protein is Urease accessory protein UreG.